The following is a 489-amino-acid chain: NADH-quinone oxidoreductase subunit N (489 aa).

14 helical membrane passes run 15-35, 44-64, 78-98, 106-126, 131-151, 166-186, 209-229, 244-264, 278-298, 306-326, 333-353, 378-398, 412-432, and 459-479; these read APLL…VFFI, GYLA…LWGV, FALT…TMSL, IEQG…ILLA, LIVL…LTGF, LVLG…IFGA, LTLL…KVAL, PTPV…AALV, WLPV…LGAV, MLAY…MVAG, AFLF…AVLI, LAVA…MAGF, GLPW…FFYL, and IALA…VFAL.

The protein belongs to the complex I subunit 2 family. As to quaternary structure, NDH-1 is composed of 14 different subunits. Subunits NuoA, H, J, K, L, M, N constitute the membrane sector of the complex.

Its subcellular location is the cell membrane. The catalysed reaction is a quinone + NADH + 5 H(+)(in) = a quinol + NAD(+) + 4 H(+)(out). Its function is as follows. NDH-1 shuttles electrons from NADH, via FMN and iron-sulfur (Fe-S) centers, to quinones in the respiratory chain. The immediate electron acceptor for the enzyme in this species is believed to be ubiquinone. Couples the redox reaction to proton translocation (for every two electrons transferred, four hydrogen ions are translocated across the cytoplasmic membrane), and thus conserves the redox energy in a proton gradient. The polypeptide is NADH-quinone oxidoreductase subunit N (Chloroflexus aggregans (strain MD-66 / DSM 9485)).